The following is a 148-amino-acid chain: Large ribosomal subunit protein bL9 (148 aa).

It belongs to the bacterial ribosomal protein bL9 family.

Binds to the 23S rRNA. This chain is Large ribosomal subunit protein bL9, found in Pseudomonas putida (strain GB-1).